The following is a 562-amino-acid chain: Isochorismate synthase 2, chloroplastic (562 aa).

Residues 1 to 55 constitute a chloroplast transit peptide; it reads MASLQCSFHFLGTNPKKYNPSSIFQSYSRTSFTKLSSRVSRQRFLRCTLSMNGCE.

It belongs to the isochorismate synthase family. Mg(2+) serves as cofactor.

It is found in the plastid. It localises to the chloroplast. The catalysed reaction is chorismate = isochorismate. It functions in the pathway siderophore biosynthesis; salicylate biosynthesis. In terms of biological role, isochorismate synthase involved in the synthesis of salicylic acid (SA) required for both local and systemic acquired resistance (LAR and SAR) while SA synthesized through the phenylalanine ammonium lyase (PAL) pathway seems to potentiate plant cell death. Also involved in phylloquinone (vitamin K1) synthesis. Has no isochorismate pyruvate lyase (IPL) activity. In Arabidopsis thaliana (Mouse-ear cress), this protein is Isochorismate synthase 2, chloroplastic (ICS2).